Reading from the N-terminus, the 796-residue chain is N-terminal acetyltransferase B complex subunit MDM20 (796 aa).

An N-acetylserine modification is found at serine 2.

The protein belongs to the MDM20/NAA25 family. In terms of assembly, component of the N-terminal acetyltransferase B (NatB) complex, which is composed of NAT3 and MDM20.

The protein localises to the cytoplasm. Non-catalytic subunit of the NatB N-terminal acetyltransferase, which catalyzes acetylation of the amino-terminal methionine residues of all proteins beginning with Met-Asp or Met-Glu and of some proteins beginning with Met-Asn or Met-Met. NatB acetylates TPM1 protein and regulates tropomyocin-actin interactions. MDM20 is required for mitochondrial inheritance during budding and together with TPM1, is essential for the integrity and assembly of actin cables. Genetically interacts with CIN8. The protein is N-terminal acetyltransferase B complex subunit MDM20 (MDM20) of Saccharomyces cerevisiae (strain ATCC 204508 / S288c) (Baker's yeast).